We begin with the raw amino-acid sequence, 343 residues long: Ferredoxin--NADP reductase (343 aa).

8 residues coordinate FAD: Cys18, Asp37, Gln45, Tyr50, Val90, Phe125, Asp290, and Thr331.

Belongs to the ferredoxin--NADP reductase type 2 family. As to quaternary structure, homodimer. The cofactor is FAD.

It catalyses the reaction 2 reduced [2Fe-2S]-[ferredoxin] + NADP(+) + H(+) = 2 oxidized [2Fe-2S]-[ferredoxin] + NADPH. The chain is Ferredoxin--NADP reductase from Parvibaculum lavamentivorans (strain DS-1 / DSM 13023 / NCIMB 13966).